We begin with the raw amino-acid sequence, 136 residues long: Large ribosomal subunit protein bL21 (136 aa).

This sequence belongs to the bacterial ribosomal protein bL21 family. As to quaternary structure, part of the 50S ribosomal subunit. Contacts protein L20.

Its function is as follows. This protein binds to 23S rRNA in the presence of protein L20. This Trichodesmium erythraeum (strain IMS101) protein is Large ribosomal subunit protein bL21.